The sequence spans 507 residues: Trigger factor (507 aa).

Residues 162–243 (GDFVSLDLSA…VRGVKEKELP (82 aa)) enclose the PPIase FKBP-type domain. The segment at 434-507 (NLPRRPSGEA…DSELPASETK (74 aa)) is disordered. Positions 442–460 (EAEDDVRDISDELDAEELE) are enriched in acidic residues. Low complexity predominate over residues 461–488 (VPAAAPSAEVTAAAGDEATATATATDAD).

It belongs to the FKBP-type PPIase family. Tig subfamily.

It is found in the cytoplasm. The catalysed reaction is [protein]-peptidylproline (omega=180) = [protein]-peptidylproline (omega=0). Involved in protein export. Acts as a chaperone by maintaining the newly synthesized protein in an open conformation. Functions as a peptidyl-prolyl cis-trans isomerase. This chain is Trigger factor, found in Parafrankia sp. (strain EAN1pec).